The primary structure comprises 452 residues: Tubulin alpha-6 chain (452 aa).

The GTP site is built by Gln11, Glu69, Ser138, Gly142, Thr143, Thr177, Asn204, and Asn226. Glu69 is a Mg(2+) binding site. Glu252 is an active-site residue.

The protein belongs to the tubulin family. As to quaternary structure, dimer of alpha and beta chains. A typical microtubule is a hollow water-filled tube with an outer diameter of 25 nm and an inner diameter of 15 nM. Alpha-beta heterodimers associate head-to-tail to form protofilaments running lengthwise along the microtubule wall with the beta-tubulin subunit facing the microtubule plus end conferring a structural polarity. Microtubules usually have 13 protofilaments but different protofilament numbers can be found in some organisms and specialized cells. The cofactor is Mg(2+).

It localises to the cytoplasm. Its subcellular location is the cytoskeleton. It is found in the spindle. The enzyme catalyses GTP + H2O = GDP + phosphate + H(+). Functionally, tubulin is the major constituent of microtubules, a cylinder consisting of laterally associated linear protofilaments composed of alpha- and beta-tubulin heterodimers. Microtubules grow by the addition of GTP-tubulin dimers to the microtubule end, where a stabilizing cap forms. Below the cap, tubulin dimers are in GDP-bound state, owing to GTPase activity of alpha-tubulin. The protein is Tubulin alpha-6 chain (TUBA6) of Naegleria pringsheimi (Amoeba).